Consider the following 665-residue polypeptide: Filensin (665 aa).

Residues 1 to 40 form a head region; the sequence is MYRRSYVFQTRKEQYEHADEASRAAEPERPADEGWAGATS. Phosphoserine is present on S5. In terms of domain architecture, IF rod spans 40-320; it reads SLAALQGLGE…RIIEIEGNRL (281 aa). Residues 41–75 are coil 1A; it reads LAALQGLGERVAAHVQRARALEQRHAGLRRQLDAF. A42 carries the N-acetylalanine modification. A linker 1 region spans residues 76 to 84; the sequence is QRLGELAGP. Residues 85–184 form a coil 1B region; the sequence is EDALARQVES…RHKKNLLEVQ (100 aa). Residues 185 to 201 are linker 12; the sequence is TYISILQQIIHTTPPAS. Residues 202-320 are coil 2; it reads IVTSGMREEK…RIIEIEGNRL (119 aa). A tail region spans residues 321–665; that stretch reads TSAFIETPIP…DKKKSGEKSS (345 aa). A phosphoserine mark is found at S341 and S420. 2 disordered regions span residues 410–439 and 506–614; these read SKFESESKEVSPLTQEGAPEDVPDGGQISK and YDGQ…KGPP. G434 carries N-myristoyl glycine lipidation. S513 bears the Phosphoserine mark. Residues 556-571 are compositionally biased toward basic and acidic residues; sequence PEEKREGEERDEESRR. S665 carries the post-translational modification Phosphoserine.

This sequence belongs to the intermediate filament family. As to quaternary structure, part of a complex required for lens intermediate filament formation composed of BFSP1, BFSP2 and CRYAA. Identified in a complex that contains VIM, EZR, AHNAK, BFSP1, BFSP2, ANK2, PLEC, PRX and spectrin. Found in a complex composed of PPL (via C-terminal linker domain), BFSP1 and BFSP2 in the retinal lens. Within the complex interacts with BFSP2. Interacts (via C-terminus) with MIP (via C-terminus) in aged lens fiber cells. Proteolytically cleaved during lens cell fiber differentiation with increased fragmentation as fiber cell age increases. Post-translationally, myristoylated at Gly-434 following proteolytic cleavage at Asp-433. In terms of processing, acetylated at Ala-42 following proteolytic cleavage at Leu-41. Expressed in the cortex and nucleus of the retina lens (at protein level).

The protein localises to the cell membrane. Its subcellular location is the cytoplasm. It is found in the cytoskeleton. It localises to the cell cortex. In terms of biological role, required for the correct formation of lens intermediate filaments as part of a complex composed of BFSP1, BFSP2 and CRYAA. Involved in altering the calcium regulation of MIP water permeability. This chain is Filensin (BFSP1), found in Homo sapiens (Human).